The chain runs to 423 residues: COP9 signalosome complex subunit 3 (423 aa).

Ala2 bears the N-acetylalanine mark. The 169-residue stretch at 197–365 (NFERALYFYE…GMVSFHDNPE (169 aa)) folds into the PCI domain. The tract at residues 402-423 (QFVQKSMGSQEDDSGNKPSSYS) is disordered. Ser407, Ser410, and Ser423 each carry phosphoserine.

The protein belongs to the CSN3 family. Component of the CSN complex, composed of COPS1/GPS1, COPS2, COPS3, COPS4, COPS5, COPS6, COPS7 (COPS7A or COPS7B), COPS8 and COPS9. In the complex, it probably interacts directly with COPS1, COPS4, COPS8 and COPS9. Interacts with CK2 and PKD. Interacts with the translation initiation factor EIF3S6 and IKBKG. Interacts with ERCC6.

It is found in the cytoplasm. Its subcellular location is the nucleus. Its function is as follows. Component of the COP9 signalosome complex (CSN), a complex involved in various cellular and developmental processes. The CSN complex is an essential regulator of the ubiquitin (Ubl) conjugation pathway by mediating the deneddylation of the cullin subunits of SCF-type E3 ligase complexes, leading to decrease the Ubl ligase activity of SCF-type complexes such as SCF, CSA or DDB2. The complex is also involved in phosphorylation of p53/TP53, c-jun/JUN, IkappaBalpha/NFKBIA, ITPK1 and IRF8/ICSBP, possibly via its association with CK2 and PKD kinases. CSN-dependent phosphorylation of TP53 and JUN promotes and protects degradation by the Ubl system, respectively. Essential to maintain the survival of epiblast cells and thus the development of the postimplantation embryo. This chain is COP9 signalosome complex subunit 3 (Cops3), found in Rattus norvegicus (Rat).